A 121-amino-acid chain; its full sequence is Non-specific lipid-transfer protein 3 (121 aa).

The N-terminal stretch at 1–28 is a signal peptide; sequence MAGARRTMALVALVAVVAAAVVAERASA. 4 disulfide bridges follow: C32/C80, C42/C57, C58/C103, and C78/C117.

The protein belongs to the plant LTP family.

In terms of biological role, plant non-specific lipid-transfer proteins transfer phospholipids as well as galactolipids across membranes. May play a role in wax or cutin deposition in the cell walls of expanding epidermal cells and certain secretory tissues. May possess an antifungal activity and protect the plant against pathogens. This is Non-specific lipid-transfer protein 3 (LTP110-A) from Oryza sativa subsp. indica (Rice).